The following is a 363-amino-acid chain: Fructose-bisphosphate aldolase C (363 aa).

A Phosphotyrosine modification is found at Tyr5. Phosphoserine occurs at positions 36, 39, and 45. Arg56 provides a ligand contact to substrate. Position 111 is an N6-acetyllysine (Lys111). Position 147 (Lys147) interacts with substrate. Glu188 (proton acceptor) is an active-site residue. Lys230 serves as the catalytic Schiff-base intermediate with dihydroxyacetone-P.

This sequence belongs to the class I fructose-bisphosphate aldolase family. In terms of assembly, homotetramer. Interacts with ATP6V1E1. As to expression, high expression in the adult brain.

It carries out the reaction beta-D-fructose 1,6-bisphosphate = D-glyceraldehyde 3-phosphate + dihydroxyacetone phosphate. The protein operates within carbohydrate degradation; glycolysis; D-glyceraldehyde 3-phosphate and glycerone phosphate from D-glucose: step 4/4. This is Fructose-bisphosphate aldolase C (Aldoc) from Rattus norvegicus (Rat).